The chain runs to 631 residues: MLENISKSEFVNFLLEKKHNIEPKTLPILEQHIREQKLDDFFLDFSIDFTDEELNNFLSKLDYWLKNTKLNSSKADVIFGLLYSCNKFIKLIKNPTFSFVEIKQFYNDILNTNKNYIIEYNKKDKGKINIAVEGNVVTRFPPEPSGFLHIGHIKAALLNDLMAKNGKLLIRFDDTNPIKEEKMYENVIIEDLHTLGIKNYTIVRSSDHFDSLYNYAIQLIQLGLAYCDNTDQLQMREERTKGIPSKNRNTDIETNLSIFSKMSSGNCLDYCLRAKIDYTNLNKALRDPVIYRHIEKEHNITKNKYKIYPTYDFACPIIDSLDGVTLALRTNEYRDRNEQYYWFLEKLNLPNKPKIYDFSRLNFENTVLSKRQMKFYVDNHFVSGWDDPRLSTLRGILRLGMDIDTLKEYIINQGSSQKSSVISWDKVWSLNKKNIDHKSARYSAIPKLYCVECLILDKNNNEIITKTEDIPKFKKNLSLGNKTIIKSSHILISQEDANILNNNEEFTLMNWGNMKVKEKQIVNGIIIKIILEENLAGDVKTTKNKLTWVNKENIIEFKILEYDTLQNDKNTDNLAEKFNTNSKKEEIWLGEKALISVSPKTYIQIERIGFFICDKPLEFILIPYTKQKRMR.

139 to 141 contacts L-glutamate; sequence RFP. The short motif at 144 to 153 is the 'HIGH' region element; it reads PSGFLHIGHI. Histidine 149 is a binding site for ATP. Residues aspartate 173, 311–315, and arginine 329 each bind L-glutamate; that span reads YDFAC. ATP is bound by residues glutamate 332 and 367-371; that span reads VLSKR. A 'KMSKS' region motif is present at residues 367 to 371; that stretch reads VLSKR.

It belongs to the class-I aminoacyl-tRNA synthetase family. Glutamate--tRNA ligase type 2 subfamily.

The protein resides in the cytoplasm. It catalyses the reaction tRNA(Glu) + L-glutamate + ATP = L-glutamyl-tRNA(Glu) + AMP + diphosphate. This Enterocytozoon bieneusi (strain H348) (Microsporidian parasite) protein is Probable glutamate--tRNA ligase, cytoplasmic.